The following is a 314-amino-acid chain: Small ribosomal subunit biogenesis GTPase RsgA (314 aa).

The disordered stretch occupies residues M1–Q21. The CP-type G domain maps to S85–F246. Residues N134 to D137 and G188 to T196 contribute to the GTP site. Residues C270, C275, H277, and C283 each contribute to the Zn(2+) site.

The protein belongs to the TRAFAC class YlqF/YawG GTPase family. RsgA subfamily. Monomer. Associates with 30S ribosomal subunit, binds 16S rRNA. Requires Zn(2+) as cofactor.

It localises to the cytoplasm. One of several proteins that assist in the late maturation steps of the functional core of the 30S ribosomal subunit. Helps release RbfA from mature subunits. May play a role in the assembly of ribosomal proteins into the subunit. Circularly permuted GTPase that catalyzes slow GTP hydrolysis, GTPase activity is stimulated by the 30S ribosomal subunit. In Burkholderia pseudomallei (strain 1710b), this protein is Small ribosomal subunit biogenesis GTPase RsgA.